The following is a 379-amino-acid chain: Mating-type protein MAT-1 (379 aa).

The segment at residues 60–117 (KARKALNAFVGFRCYYITIPMFKPWPMKKLSNLIGLLWEADPNKSLWSLMAKAWSTIR) is a DNA-binding region (alpha box).

It belongs to the MATALPHA1 family.

It localises to the nucleus. In terms of biological role, mating type proteins are sequence specific DNA-binding proteins that act as master switches in fungal differentiation by controlling gene expression in a cell type-specific fashion. Transcriptional activator that induces the transcription of alpha-specific genes. The polypeptide is Mating-type protein MAT-1 (MAT1) (Cochliobolus carbonum (strain 26-R-13) (Maize leaf spot fungus)).